A 211-amino-acid chain; its full sequence is Dephospho-CoA kinase (211 aa).

The DPCK domain occupies 7–211 (LIGVIGRSGA…ILTRRGVLGE (205 aa)). 15–20 (GAGKNV) serves as a coordination point for ATP.

This sequence belongs to the CoaE family.

The protein resides in the cytoplasm. It catalyses the reaction 3'-dephospho-CoA + ATP = ADP + CoA + H(+). Its pathway is cofactor biosynthesis; coenzyme A biosynthesis; CoA from (R)-pantothenate: step 5/5. Functionally, catalyzes the phosphorylation of the 3'-hydroxyl group of dephosphocoenzyme A to form coenzyme A. The polypeptide is Dephospho-CoA kinase (Treponema pallidum (strain Nichols)).